The sequence spans 443 residues: Ribulose bisphosphate carboxylase large chain (443 aa).

Substrate-binding residues include Asn-89 and Thr-139. Residue Lys-141 is the Proton acceptor of the active site. Lys-143 provides a ligand contact to substrate. Mg(2+) is bound by residues Lys-167, Asp-169, and Glu-170. Residue Lys-167 is modified to N6-carboxylysine. Catalysis depends on His-260, which acts as the Proton acceptor. Residues Arg-261, His-293, and Ser-345 each coordinate substrate.

This sequence belongs to the RuBisCO large chain family. Type I subfamily. Heterohexadecamer of 8 large chains and 8 small chains; disulfide-linked. The disulfide link is formed within the large subunit homodimers. Mg(2+) serves as cofactor. Post-translationally, the disulfide bond which can form in the large chain dimeric partners within the hexadecamer appears to be associated with oxidative stress and protein turnover.

It localises to the plastid. The protein localises to the chloroplast. It carries out the reaction 2 (2R)-3-phosphoglycerate + 2 H(+) = D-ribulose 1,5-bisphosphate + CO2 + H2O. The enzyme catalyses D-ribulose 1,5-bisphosphate + O2 = 2-phosphoglycolate + (2R)-3-phosphoglycerate + 2 H(+). In terms of biological role, ruBisCO catalyzes two reactions: the carboxylation of D-ribulose 1,5-bisphosphate, the primary event in carbon dioxide fixation, as well as the oxidative fragmentation of the pentose substrate in the photorespiration process. Both reactions occur simultaneously and in competition at the same active site. The sequence is that of Ribulose bisphosphate carboxylase large chain from Callitriche heterophylla (Large water-starwort).